The following is a 182-amino-acid chain: Large ribosomal subunit protein uL5m (182 aa).

This sequence belongs to the universal ribosomal protein uL5 family.

Its subcellular location is the mitochondrion. This is Large ribosomal subunit protein uL5m (RPL5) from Reclinomonas americana.